A 183-amino-acid chain; its full sequence is NEDD8-conjugating enzyme Ubc12 (183 aa).

At M1 the chain carries N-acetylmethionine. Positions 1–29 (MIKLFSLKQQKKEEESAGGTKGSSKKASA) are disordered. Residues 1 to 57 (MIKLFSLKQQKKEEESAGGTKGSSKKASAAQLRIQKDINELNLPKTCDISFSDPDDL) are interaction with UBA3. Position 3 is an N6-acetyllysine (K3). Residues 29–173 (AAQLRIQKDI…VQRSMRGGYI (145 aa)) enclose the UBC core domain. S50 bears the Phosphoserine mark. C111 (glycyl thioester intermediate) is an active-site residue. Position 169 is an asymmetric dimethylarginine; alternate (R169). R169 bears the Omega-N-methylarginine; alternate mark.

It belongs to the ubiquitin-conjugating enzyme family. UBC12 subfamily. As to quaternary structure, interacts with UBA3 and RBX1. Interacts (N-terminally acetylated form) with (via DCUN1 domain) DCUN1D1, DCUN1D2, DCUN1D3, DCUN1D4 and DCUN1D5. Post-translationally, the acetylation of Met-1 increases affinity for DCUN1D1 by about 2 orders of magnitude and is crucial for NEDD8 transfer to cullins.

The catalysed reaction is [E1 NEDD8-activating enzyme]-S-[NEDD8 protein]-yl-L-cysteine + [E2 NEDD8-conjugating enzyme]-L-cysteine = [E1 NEDD8-activating enzyme]-L-cysteine + [E2 NEDD8-conjugating enzyme]-S-[NEDD8-protein]-yl-L-cysteine.. It participates in protein modification; protein neddylation. Its function is as follows. Accepts the ubiquitin-like protein NEDD8 from the UBA3-NAE1 E1 complex and catalyzes its covalent attachment to other proteins. The specific interaction with the E3 ubiquitin ligase RBX1, but not RBX2, suggests that the RBX1-UBE2M complex neddylates specific target proteins, such as CUL1, CUL2, CUL3 and CUL4. Involved in cell proliferation. The chain is NEDD8-conjugating enzyme Ubc12 (Ube2m) from Mus musculus (Mouse).